The primary structure comprises 360 residues: Acetylxylan esterase / glucomannan deacetylase (360 aa).

The first 21 residues, 1–21 (MKPHALIGLLAGMLLSSSLYA), serve as a signal peptide directing secretion. Ser-151 functions as the Nucleophile in the catalytic mechanism.

The protein belongs to the carbohydrate esterase 2 (CE2) family.

It is found in the secreted. It carries out the reaction Deacetylation of xylans and xylo-oligosaccharides.. The protein operates within glycan degradation; xylan degradation. Involved in the degradation of plant cell wall polysaccharides. Catalyzes the deacetylation of acetylated birchwood xylan and glucomannan, with a large preference for the latter, and of the synthetic substrate 4-nitrophenyl acetate (4-NPAc). The protein is Acetylxylan esterase / glucomannan deacetylase of Cellvibrio japonicus (strain Ueda107) (Pseudomonas fluorescens subsp. cellulosa).